The following is a 315-amino-acid chain: uncharacterized protein (315 aa).

Transmembrane regions (helical) follow at residues 19-39 (IGAG…GNVF), 56-76 (TVLV…LHSF), and 81-101 (PLKK…ISLI). The segment covering 154–171 (EDSASSGRTSSSVNQPIQ) has biased composition (polar residues). The interval 154–214 (EDSASSGRTS…EREARAQEHD (61 aa)) is disordered. The span at 203–214 (GGEREARAQEHD) shows a compositional bias: basic and acidic residues.

Belongs to the ATPase C chain family.

The protein resides in the mitochondrion membrane. This is an uncharacterized protein from Arabidopsis thaliana (Mouse-ear cress).